The following is a 334-amino-acid chain: o-succinylbenzoate synthase (334 aa).

Lys107 functions as the Proton donor in the catalytic mechanism. Mg(2+)-binding residues include Asp135, Glu162, and Asp185. Lys209 serves as the catalytic Proton acceptor.

This sequence belongs to the mandelate racemase/muconate lactonizing enzyme family. MenC type 1 subfamily. A divalent metal cation serves as cofactor.

It catalyses the reaction (1R,6R)-6-hydroxy-2-succinyl-cyclohexa-2,4-diene-1-carboxylate = 2-succinylbenzoate + H2O. Its pathway is quinol/quinone metabolism; 1,4-dihydroxy-2-naphthoate biosynthesis; 1,4-dihydroxy-2-naphthoate from chorismate: step 4/7. The protein operates within quinol/quinone metabolism; menaquinone biosynthesis. Its function is as follows. Converts 2-succinyl-6-hydroxy-2,4-cyclohexadiene-1-carboxylate (SHCHC) to 2-succinylbenzoate (OSB). The protein is o-succinylbenzoate synthase of Mycobacterium leprae (strain TN).